A 312-amino-acid polypeptide reads, in one-letter code: Ribosomal protein L11 methyltransferase (312 aa).

S-adenosyl-L-methionine is bound by residues Thr160, Gly181, Asp203, and Asn246.

The protein belongs to the methyltransferase superfamily. PrmA family.

It is found in the cytoplasm. The catalysed reaction is L-lysyl-[protein] + 3 S-adenosyl-L-methionine = N(6),N(6),N(6)-trimethyl-L-lysyl-[protein] + 3 S-adenosyl-L-homocysteine + 3 H(+). Methylates ribosomal protein L11. In Staphylococcus saprophyticus subsp. saprophyticus (strain ATCC 15305 / DSM 20229 / NCIMB 8711 / NCTC 7292 / S-41), this protein is Ribosomal protein L11 methyltransferase.